Consider the following 166-residue polypeptide: Large ribosomal subunit protein uL10 (166 aa).

It belongs to the universal ribosomal protein uL10 family. Part of the ribosomal stalk of the 50S ribosomal subunit. The N-terminus interacts with L11 and the large rRNA to form the base of the stalk. The C-terminus forms an elongated spine to which L12 dimers bind in a sequential fashion forming a multimeric L10(L12)X complex.

Functionally, forms part of the ribosomal stalk, playing a central role in the interaction of the ribosome with GTP-bound translation factors. The polypeptide is Large ribosomal subunit protein uL10 (Bacillus velezensis (strain DSM 23117 / BGSC 10A6 / LMG 26770 / FZB42) (Bacillus amyloliquefaciens subsp. plantarum)).